The chain runs to 100 residues: NADH-quinone oxidoreductase subunit K (100 aa).

Transmembrane regions (helical) follow at residues 4–24 (LQHGLILAAILFVLGLTGLLI), 28–48 (LLFMLISLEVMINAAALAFVV), and 60–80 (VMYILAITLAAAEASIGLALL).

Belongs to the complex I subunit 4L family. In terms of assembly, NDH-1 is composed of 13 different subunits. Subunits NuoA, H, J, K, L, M, N constitute the membrane sector of the complex.

It localises to the cell inner membrane. It carries out the reaction a quinone + NADH + 5 H(+)(in) = a quinol + NAD(+) + 4 H(+)(out). Functionally, NDH-1 shuttles electrons from NADH, via FMN and iron-sulfur (Fe-S) centers, to quinones in the respiratory chain. The immediate electron acceptor for the enzyme in this species is believed to be ubiquinone. Couples the redox reaction to proton translocation (for every two electrons transferred, four hydrogen ions are translocated across the cytoplasmic membrane), and thus conserves the redox energy in a proton gradient. The chain is NADH-quinone oxidoreductase subunit K from Yersinia pseudotuberculosis serotype O:1b (strain IP 31758).